We begin with the raw amino-acid sequence, 600 residues long: Aspartate--tRNA(Asp/Asn) ligase (600 aa).

Position 181 (Glu-181) interacts with L-aspartate. Positions 205-208 (QQYK) are aspartate. Arg-227 is an L-aspartate binding site. Residues 227-229 (RDE) and Gln-236 contribute to the ATP site. His-455 provides a ligand contact to L-aspartate. Glu-490 contacts ATP. Arg-497 contributes to the L-aspartate binding site. 542–545 (GLDR) is a binding site for ATP.

Belongs to the class-II aminoacyl-tRNA synthetase family. Type 1 subfamily. In terms of assembly, homodimer.

The protein resides in the cytoplasm. The enzyme catalyses tRNA(Asx) + L-aspartate + ATP = L-aspartyl-tRNA(Asx) + AMP + diphosphate. In terms of biological role, aspartyl-tRNA synthetase with relaxed tRNA specificity since it is able to aspartylate not only its cognate tRNA(Asp) but also tRNA(Asn). Reaction proceeds in two steps: L-aspartate is first activated by ATP to form Asp-AMP and then transferred to the acceptor end of tRNA(Asp/Asn). The protein is Aspartate--tRNA(Asp/Asn) ligase of Methylacidiphilum infernorum (isolate V4) (Methylokorus infernorum (strain V4)).